Reading from the N-terminus, the 201-residue chain is uncharacterized protein (201 aa).

Belongs to the mimivirus L885/R898 family.

This is an uncharacterized protein from Acanthamoeba polyphaga (Amoeba).